A 625-amino-acid chain; its full sequence is BTB/POZ domain-containing protein At5g48130 (625 aa).

The region spanning 41 to 105 (ASVHVRVCNK…IYGCPTLIHP (65 aa)) is the BTB domain. Residues 217–469 (DTWIKDLTDL…VQALFIQQLN (253 aa)) enclose the NPH3 domain. A compositionally biased stretch (polar residues) spans 494–507 (VPSSRPLTSQQSPC). Residues 494-513 (VPSSRPLTSQQSPCTDDETG) form a disordered region.

It belongs to the NPH3 family.

It participates in protein modification; protein ubiquitination. Its function is as follows. May act as a substrate-specific adapter of an E3 ubiquitin-protein ligase complex (CUL3-RBX1-BTB) which mediates the ubiquitination and subsequent proteasomal degradation of target proteins. This chain is BTB/POZ domain-containing protein At5g48130, found in Arabidopsis thaliana (Mouse-ear cress).